The following is a 91-amino-acid chain: C-C motif chemokine 5 (91 aa).

The signal sequence occupies residues 1-23 (MKISAAVLTVVLMAASLCAPASA). 2 cysteine pairs are disulfide-bonded: Cys-33-Cys-57 and Cys-34-Cys-73.

Belongs to the intercrine beta (chemokine CC) family.

The protein resides in the secreted. In terms of biological role, chemoattractant for blood monocytes, memory T-helper cells and eosinophils. Causes the release of histamine from basophils and activates eosinophils. May activate several chemokine receptors including CCR1, CCR3, CCR4 and CCR5. May also be an agonist of the G protein-coupled receptor GPR75. Together with GPR75, may play a role in neuron survival through activation of a downstream signaling pathway involving the PI3, Akt and MAP kinases. By activating GPR75 may also play a role in insulin secretion by islet cells. This chain is C-C motif chemokine 5 (CCL5), found in Sigmodon hispidus (Hispid cotton rat).